The primary structure comprises 460 residues: tRNA modification GTPase MnmE (460 aa).

(6S)-5-formyl-5,6,7,8-tetrahydrofolate contacts are provided by R29, E86, and K126. Residues 222–383 (GMRVVIAGRP…LAEHLKECMG (162 aa)) form the TrmE-type G domain. Residue N232 coordinates K(+). GTP is bound by residues 232 to 237 (NAGKSS), 251 to 257 (TAIAGTT), 276 to 279 (DTAG), and 341 to 344 (NKAD). Position 236 (S236) interacts with Mg(2+). The K(+) site is built by T251, I253, and T256. Residue T257 participates in Mg(2+) binding. Residue K460 coordinates (6S)-5-formyl-5,6,7,8-tetrahydrofolate.

Belongs to the TRAFAC class TrmE-Era-EngA-EngB-Septin-like GTPase superfamily. TrmE GTPase family. In terms of assembly, homodimer. Heterotetramer of two MnmE and two MnmG subunits. K(+) is required as a cofactor.

Its subcellular location is the cytoplasm. Exhibits a very high intrinsic GTPase hydrolysis rate. Involved in the addition of a carboxymethylaminomethyl (cmnm) group at the wobble position (U34) of certain tRNAs, forming tRNA-cmnm(5)s(2)U34. This Pseudoalteromonas atlantica (strain T6c / ATCC BAA-1087) protein is tRNA modification GTPase MnmE.